Consider the following 329-residue polypeptide: Prostaglandin reductase 1 (329 aa).

At T18 the chain carries Phosphothreonine. A Phosphoserine modification is found at S20. NADP(+)-binding positions include 152–155 (GAVG), K178, Y193, N217, 239–245 (CGAISQY), 270–272 (FIV), and N321. Residue K178 is modified to N6-(2-hydroxyisobutyryl)lysine; alternate. K178 is subject to N6-acetyllysine; alternate.

It belongs to the NADP-dependent oxidoreductase L4BD family. Monomer or homodimer.

Its subcellular location is the cytoplasm. It catalyses the reaction 13,14-dihydro-15-oxo-prostaglandin E1 + NADP(+) = 15-oxoprostaglandin E1 + NADPH + H(+). The enzyme catalyses 13,14-dihydro-15-oxo-prostaglandin E2 + NADP(+) = 15-oxoprostaglandin E2 + NADPH + H(+). It carries out the reaction 13,14-dihydro-15-oxo-prostaglandin F1alpha + NADP(+) = 15-oxoprostaglandin F1alpha + NADPH + H(+). The catalysed reaction is 13,14-dihydro-15-oxo-PGF2alpha + NADP(+) = 15-oxoprostaglandin F2alpha + NADPH + H(+). It catalyses the reaction leukotriene B4 + NADP(+) = 12-oxo-leukotriene B4 + NADPH + H(+). The enzyme catalyses 20-hydroxy-leukotriene B4 + NADP(+) = 12-oxo-20-hydroxy-leukotriene B4 + NADPH + H(+). It carries out the reaction 6-trans-leukotriene B4 + NADP(+) = 12-oxo-(5S)-hydroxy-(6E,8E,10E,14Z)-eicosatetraenoate + NADPH + H(+). The catalysed reaction is (5S,12S)-dihydroxy-(6E,10E,12E,14Z)-eicosatetraenoate + NADP(+) = 12-oxo-(5S)-hydroxy-(6E,8E,10E,14Z)-eicosatetraenoate + NADPH + H(+). It catalyses the reaction an n-alkanal + NADP(+) = an alk-2-enal + NADPH + H(+). The enzyme catalyses hexanal + NADP(+) = (E)-hex-2-enal + NADPH + H(+). It carries out the reaction octanal + NADP(+) = (2E)-octenal + NADPH + H(+). The catalysed reaction is decanal + NADP(+) = (2E)-decenal + NADPH + H(+). It catalyses the reaction dodecanal + NADP(+) = (2E)-dodecenal + NADPH + H(+). The enzyme catalyses 4-hydroxynonanal + NADP(+) = (E)-4-hydroxynon-2-enal + NADPH + H(+). It carries out the reaction pentan-2-one + NADP(+) = (E)-pent-3-en-2-one + NADPH + H(+). The catalysed reaction is nonan-2-one + NADP(+) = (3E)-nonen-2-one + NADPH + H(+). NAD(P)H-dependent oxidoreductase involved in metabolic inactivation of pro- and anti-inflammatory eicosanoids: prostaglandins (PG), leukotrienes (LT) and lipoxins (LX). Catalyzes with high efficiency the reduction of the 13,14 double bond of 15-oxoPGs, including 15-oxo-PGE1, 15-oxo-PGE2, 15-oxo-PGF1-alpha and 15-oxo-PGF2-alpha. Catalyzes with lower efficiency the oxidation of the hydroxyl group at C12 of LTB4 and its derivatives, converting them into biologically less active 12-oxo-LTB4 metabolites. Reduces 15-oxo-LXA4 to 13,14 dihydro-15-oxo-LXA4, enhancing neutrophil recruitment at the inflammatory site. Plays a role in metabolic detoxification of alkenals and ketones. Reduces alpha,beta-unsaturated alkenals and ketones, particularly those with medium-chain length, showing highest affinity toward (2E)-decenal and (3E)-3-nonen-2-one. Inactivates 4-hydroxy-2-nonenal, a cytotoxic lipid constituent of oxidized low-density lipoprotein particles. The chain is Prostaglandin reductase 1 (Ptgr1) from Rattus norvegicus (Rat).